A 475-amino-acid chain; its full sequence is Phosphoglucosamine mutase (475 aa).

The Phosphoserine intermediate role is filled by serine 126. Residues serine 126, aspartate 265, aspartate 267, and aspartate 269 each contribute to the Mg(2+) site. Serine 126 carries the post-translational modification Phosphoserine.

This sequence belongs to the phosphohexose mutase family. The cofactor is Mg(2+). Post-translationally, activated by phosphorylation.

It carries out the reaction alpha-D-glucosamine 1-phosphate = D-glucosamine 6-phosphate. Functionally, catalyzes the conversion of glucosamine-6-phosphate to glucosamine-1-phosphate. This is Phosphoglucosamine mutase from Synechococcus sp. (strain ATCC 27144 / PCC 6301 / SAUG 1402/1) (Anacystis nidulans).